We begin with the raw amino-acid sequence, 252 residues long: Probable transcriptional regulatory protein Bcav_1989 (252 aa).

Belongs to the TACO1 family.

The protein localises to the cytoplasm. This chain is Probable transcriptional regulatory protein Bcav_1989, found in Beutenbergia cavernae (strain ATCC BAA-8 / DSM 12333 / CCUG 43141 / JCM 11478 / NBRC 16432 / NCIMB 13614 / HKI 0122).